A 235-amino-acid polypeptide reads, in one-letter code: MEGWQRAFVLHSRPWSETSLMLDVFTEESGRVRLVAKGARSKRSNLKGALQPFTPLLVRFGGRGEVKTLRSAEAVSLALPLSGITLYSGLYVNELISRVLEHETRFSELFFDYLHCIQALAGATDSPEPALRRFELALLGHLGYGVDFLHCAGSGDSVDDTMTYRYREEKGFIASIVIDNTTFTGRHLRALSEREFPDQDTLRAAKRFTRIALKPYLGGKPLKSRELFRQFVPKR.

Belongs to the RecO family.

Involved in DNA repair and RecF pathway recombination. In Enterobacter sp. (strain 638), this protein is DNA repair protein RecO.